The following is a 387-amino-acid chain: Aminodeoxyfutalosine deaminase (387 aa).

Basic and acidic residues predominate over residues 1-10 (MRPAYDDPRT). The tract at residues 1-37 (MRPAYDDPRTTDQPITRARPPPRAARGRRLGEEPLTE) is disordered. The Zn(2+) site is built by His-61 and His-63. The substrate site is built by Arg-116, Asp-183, and Gly-217. His-244 contributes to the Zn(2+) binding site. Glu-247 acts as the Proton donor in catalysis. Asp-325 is a binding site for Zn(2+).

Belongs to the metallo-dependent hydrolases superfamily. Adenosine and AMP deaminases family. The cofactor is Zn(2+).

The enzyme catalyses 6-amino-6-deoxyfutalosine + H2O + H(+) = futalosine + NH4(+). It functions in the pathway quinol/quinone metabolism; menaquinone biosynthesis. Catalyzes the deamination of aminodeoxyfutalosine (AFL) into futalosine (FL), a step in the biosynthesis of menaquinone (MK, vitamin K2). This Streptomyces coelicolor (strain ATCC BAA-471 / A3(2) / M145) protein is Aminodeoxyfutalosine deaminase.